The chain runs to 306 residues: Armadillo repeat-containing protein 10 (306 aa).

A helical membrane pass occupies residues 7 to 29 (VGWVAAGLVLGAGACYCIYRLTR). A Phosphoserine modification is found at serine 43. Phosphothreonine is present on threonine 48. The stretch at 101 to 143 (GGIPIVGSKINSLNQSIKEKALNALNNLSVNVENQTKIKIYVR) is one ARM repeat.

As to quaternary structure, interacts with the DNA-binding domain of p53/TP53.

The protein resides in the endoplasmic reticulum membrane. It is found in the mitochondrion outer membrane. May play a role in cell survival and cell growth. May suppress the transcriptional activity of p53/TP53. The polypeptide is Armadillo repeat-containing protein 10 (Armc10) (Rattus norvegicus (Rat)).